The primary structure comprises 673 residues: Putative transcription factor tau subunit sfc9 (673 aa).

In terms of assembly, may be a component of the TFIIIC complex.

Its subcellular location is the nucleus. The polypeptide is Putative transcription factor tau subunit sfc9 (Schizosaccharomyces pombe (strain 972 / ATCC 24843) (Fission yeast)).